The following is a 157-amino-acid chain: S-ribosylhomocysteine lyase (157 aa).

The Fe cation site is built by H53, H57, and C124.

The protein belongs to the LuxS family. Homodimer. The cofactor is Fe cation.

It catalyses the reaction S-(5-deoxy-D-ribos-5-yl)-L-homocysteine = (S)-4,5-dihydroxypentane-2,3-dione + L-homocysteine. Involved in the synthesis of autoinducer 2 (AI-2) which is secreted by bacteria and is used to communicate both the cell density and the metabolic potential of the environment. The regulation of gene expression in response to changes in cell density is called quorum sensing. Catalyzes the transformation of S-ribosylhomocysteine (RHC) to homocysteine (HC) and 4,5-dihydroxy-2,3-pentadione (DPD). The polypeptide is S-ribosylhomocysteine lyase (Borreliella afzelii (strain PKo) (Borrelia afzelii)).